The primary structure comprises 166 residues: Sperm-egg fusion protein TMEM95 (166 aa).

The N-terminal stretch at 1–16 (MWTLALGGIFLAAVEA) is a signal peptide. Intrachain disulfides connect C17-C118, C20-C121, C105-C128, and C109-C134. Residues 17–145 (CVFCRFPDRE…PGSHDLWEAR (129 aa)) lie on the Extracellular side of the membrane. Residue N117 is glycosylated (N-linked (GlcNAc...) asparagine). A helical transmembrane segment spans residues 146-165 (ILLLFVCGTALLLGVPSLAV). E166 is a topological domain (cytoplasmic).

This sequence belongs to the TMEM95 family. In terms of assembly, does not interact with sperm-egg fusion proteins IZUMO1 or IZUMO1R/JUNO. N-glycosylated. Detected in testis and brain with higher levels in brain than testis.

The protein localises to the cytoplasmic vesicle. The protein resides in the secretory vesicle. Its subcellular location is the acrosome membrane. Sperm protein required for fusion of sperm with the egg membrane during fertilization. This chain is Sperm-egg fusion protein TMEM95, found in Bos taurus (Bovine).